A 413-amino-acid polypeptide reads, in one-letter code: Cis,cis-muconate transport protein (413 aa).

Residues 1–16 (MYSNNQRSRIGSHTWK) are Cytoplasmic-facing. A helical membrane pass occupies residues 17–37 (IAFLFAFLALLVDGADLMLLS). Over 38 to 53 (YSLNSIKAEFNLSTVE) the chain is Periplasmic. Residues 54 to 74 (AGMLGSFTLAGMAIGGIFGGW) form a helical membrane-spanning segment. Topologically, residues 75-85 (ACDRFGRVRIV) are cytoplasmic. A helical membrane pass occupies residues 86–106 (VISILTFSILTCGLGLTQSFI). The Periplasmic segment spans residues 107 to 112 (QFGVLR). The chain crosses the membrane as a helical span at residues 113 to 133 (FFASLGLGSLYIACNTLMAEY). The Cytoplasmic segment spans residues 134–145 (VPTKYRTTVLGT). A helical membrane pass occupies residues 146–166 (LQAGWTVGYIVATLLAGWLIP). The Periplasmic segment spans residues 167–171 (DHGWR). Residues 172 to 192 (VLFYVAIIPVLMAVLMHFFVP) traverse the membrane as a helical segment. The Cytoplasmic segment spans residues 193-228 (EPAAWQQSRLAPSKQTETVKTSAFKLIFQDKRNRNM). A helical transmembrane segment spans residues 229–249 (FILWALTAGFLQFGYYGVNNW). At 250-266 (MPSYLESELGMKFKEMT) the chain is on the periplasmic side. A helical transmembrane segment spans residues 267-287 (AYMVGTYTAMILGKILAGFMA). Residues 288 to 293 (DKLGRR) lie on the Cytoplasmic side of the membrane. Residues 294–314 (FTYAFGAIGTAIFLPLIVFYN) form a helical membrane-spanning segment. Residues 315–318 (SPDN) are Periplasmic-facing. A helical membrane pass occupies residues 319-339 (ILYLLVIFGFLYGIPYGVNAT). Residues 340 to 352 (YMTESFPTAIRGT) are Cytoplasmic-facing. The chain crosses the membrane as a helical span at residues 353 to 376 (AIGGAYNVGRLGAAIAPATIGFLA). Topologically, residues 377 to 382 (SGGSIG) are periplasmic. Residues 383-403 (LGFVVMGAAYFICGVIPALFI) form a helical membrane-spanning segment. Residues 404-413 (KEKQYDPQQS) lie on the Cytoplasmic side of the membrane.

It belongs to the major facilitator superfamily. Aromatic acid:H(+) symporter (AAHS) (TC 2.A.1.15) family.

The protein resides in the cell inner membrane. Probable uptake of muconate. In Acinetobacter baylyi (strain ATCC 33305 / BD413 / ADP1), this protein is Cis,cis-muconate transport protein (mucK).